The sequence spans 173 residues: Protein SUGARY ENHANCER 1 (173 aa).

Residues 1–31 (MIRPAPWVGAGHRGRGGEAGACTESLGSESG) are disordered.

This sequence belongs to the fantastic four family.

Its function is as follows. Involved in starch metabolism in endosperm. Acts as a modifier of SUGARY1 (SU1), an isoamylase starch-debranching enzyme involved in amylopectin biosynthesis in endosperm. In Zea mays (Maize), this protein is Protein SUGARY ENHANCER 1.